The following is an 869-amino-acid chain: MTATPADRPDPGVAGDADWAAEARPLLVHADMRLCKRFDQGEPTERLLALRARAVDQLMRNAWTRCIPADAGLSLHAVGGYGRGELFPRSDVDLLVLGETAAQQRHEQALARLFALLWDVGLPISHAVRSPAQCTSAAADQTVLTALIESRPLVADAQARAALAAAIAPQQVWPPRAFFQAKREELHARHQRFGDTADNLEPDIKDGPGGLRDLQTLGWMALRAFGVKDLEALVGLGHVGMDEAAALRREREELARLRYGLHLVANRPEERLRFDYQKTLAERLGFADDPESLGVEKMMQRFYRSAALIRRISDRLLQRFEEQFDGEAVPVQLDAGFSLRRGYLTADADTWPDGDVVQVFALFAQWAAHREVRGLHSLTARALAEVLRDLPAYDVADAIARDRFMALLRGPRAVETLNRMARLGVLGQWIPAFASVSGRMQFDLFHVYTVDQHTLMVLRNIALFAAGRADERFSITHEVWPRLRKPELLLLAGLFHDIAKGRGGDHSELGAVDARAFCLAHRLSEGDTELVTWLVEQHLRMSVTAQKQDISDPEVIHRFATLVGTRERLDYLYLLTCADIAGTSPKLWNAWKDRLLADLYFAARRALREGLEHPPPREERLREARESARTLMQAQGHDDATIDRQFAGMPDENFLRFRPEQLAWQAASLIEVQIGQTLVKARRAVPDNDALEVFVYSPDRDGLFSAIVATLDRKGYGIHRARVLDAPHDAIFDVFEVLPQDSSADGDPQRLAAALRQVLAGDLLKVRPSRRAVPRQLRHFRFAPRVEFSESAGGRRTRISLVAPDRPGLLADVAHVLRMQHLRVHDARIATFGERAEDQFQITDEHDRPLPDAARQALRDALCACLDPT.

The segment at 1-332 (MTATPADRPD…QFDGEAVPVQ (332 aa)) is uridylyltransferase. The segment at 333–691 (LDAGFSLRRG…RRAVPDNDAL (359 aa)) is uridylyl-removing. An HD domain is found at 450–572 (VDQHTLMVLR…VGTRERLDYL (123 aa)). ACT domains are found at residues 692 to 771 (EVFV…PSRR) and 798 to 869 (RISL…LDPT).

It belongs to the GlnD family. Mg(2+) serves as cofactor.

The enzyme catalyses [protein-PII]-L-tyrosine + UTP = [protein-PII]-uridylyl-L-tyrosine + diphosphate. It catalyses the reaction [protein-PII]-uridylyl-L-tyrosine + H2O = [protein-PII]-L-tyrosine + UMP + H(+). With respect to regulation, uridylyltransferase (UTase) activity is inhibited by glutamine, while glutamine activates uridylyl-removing (UR) activity. Modifies, by uridylylation and deuridylylation, the PII regulatory proteins (GlnB and homologs), in response to the nitrogen status of the cell that GlnD senses through the glutamine level. Under low glutamine levels, catalyzes the conversion of the PII proteins and UTP to PII-UMP and PPi, while under higher glutamine levels, GlnD hydrolyzes PII-UMP to PII and UMP (deuridylylation). Thus, controls uridylylation state and activity of the PII proteins, and plays an important role in the regulation of nitrogen assimilation and metabolism. The chain is Bifunctional uridylyltransferase/uridylyl-removing enzyme from Xanthomonas campestris pv. campestris (strain 8004).